The chain runs to 136 residues: DUF35 domain-containing scaffold protein (136 aa).

3 residues coordinate Zn(2+): C25, C38, and C41.

This sequence belongs to the scaffold protein DUF35 family. Interacts with acetoacetyl-CoA thiolase and HMG-CoA synthase (HMGCS) that catalyzes the first and second step in the mevalonate pathway, respectively.

Functionally, functions as a scaffold to connect the acetoacetyl-CoA thiolase and HMG-CoA synthase (HMGCS) dimers in the channeling thiolase/HMGCS complex, which allows for efficient coupling of the endergonic thiolase reaction with the exergonic HMGCS reaction. This chain is DUF35 domain-containing scaffold protein, found in Pyrococcus furiosus (strain ATCC 43587 / DSM 3638 / JCM 8422 / Vc1).